Here is a 71-residue protein sequence, read N- to C-terminus: Delta-actitoxin-Avd2b 2 (71 aa).

Residues 1-20 (MNRLLVFLMLGAAFMLVVSA) form the signal peptide. A propeptide spanning residues 21-41 (NDAYGDEPAFKDLNQGDESLG) is cleaved from the precursor. 3 disulfides stabilise this stretch: cysteine 46–cysteine 61, cysteine 47–cysteine 55, and cysteine 49–cysteine 66.

Belongs to the sea anemone short toxin (type III) family.

The protein resides in the secreted. It localises to the nematocyst. Functionally, voltage-gated sodium channel (Nav) inhibitor. 1 uM completely inhibits insect voltage-gated sodium channel inactivation (DmNav1 from D.melanogaster). The sequence is that of Delta-actitoxin-Avd2b 2 from Anemonia viridis (Snakelocks anemone).